The following is a 243-amino-acid chain: Small ribosomal subunit protein uS3 (243 aa).

The KH type-2 domain maps to 38–106 (IRKYLNARLA…DIQINIFEVK (69 aa)). The tract at residues 217–243 (TQTKESGRGGNGNNNGGKNFKRKKNNR) is disordered.

The protein belongs to the universal ribosomal protein uS3 family. As to quaternary structure, part of the 30S ribosomal subunit. Forms a tight complex with proteins S10 and S14.

Binds the lower part of the 30S subunit head. Binds mRNA in the 70S ribosome, positioning it for translation. The polypeptide is Small ribosomal subunit protein uS3 (Phocaeicola vulgatus (strain ATCC 8482 / DSM 1447 / JCM 5826 / CCUG 4940 / NBRC 14291 / NCTC 11154) (Bacteroides vulgatus)).